Consider the following 173-residue polypeptide: Photosystem I assembly protein Ycf3 (173 aa).

TPR repeat units follow at residues 35 to 68 (AFAYYRDGMSAQADGEYSEALENYEEALRLEDDP), 72 to 105 (SYILYNMGLIYASNGDHHKALELYHEAIDLNPRM), and 120 to 153 (GEKAKQSGNEDESEALFDKAAEYWKQAIRIAPNN).

This sequence belongs to the Ycf3 family.

It localises to the cellular thylakoid membrane. In terms of biological role, essential for the assembly of the photosystem I (PSI) complex. May act as a chaperone-like factor to guide the assembly of the PSI subunits. The protein is Photosystem I assembly protein Ycf3 of Picosynechococcus sp. (strain ATCC 27264 / PCC 7002 / PR-6) (Agmenellum quadruplicatum).